An 85-amino-acid chain; its full sequence is Phosphocarrier protein HPr (85 aa).

In terms of domain architecture, HPr spans 1 to 85 (MFQKEIKINA…HLSKIMTELE (85 aa)). H15 serves as the catalytic Pros-phosphohistidine intermediate.

This sequence belongs to the HPr family.

The protein resides in the cytoplasm. In terms of biological role, general (non sugar-specific) component of the phosphoenolpyruvate-dependent sugar phosphotransferase system (sugar PTS). This major carbohydrate active-transport system catalyzes the phosphorylation of incoming sugar substrates concomitantly with their translocation across the cell membrane. The phosphoryl group from phosphoenolpyruvate (PEP) is transferred to the phosphoryl carrier protein HPr by enzyme I. Phospho-HPr then transfers it to the PTS EIIA domain. The sequence is that of Phosphocarrier protein HPr (ptsH) from Buchnera aphidicola subsp. Schizaphis graminum (strain Sg).